Here is a 234-residue protein sequence, read N- to C-terminus: Peptidase E (234 aa).

Active-site charge relay system residues include serine 123, aspartate 138, and histidine 160.

The protein belongs to the peptidase S51 family.

Its subcellular location is the cytoplasm. It catalyses the reaction Dipeptidase E catalyzes the hydrolysis of dipeptides Asp-|-Xaa. It does not act on peptides with N-terminal Glu, Asn or Gln, nor does it cleave isoaspartyl peptides.. Hydrolyzes dipeptides containing N-terminal aspartate residues. May play a role in allowing the cell to use peptide aspartate to spare carbon otherwise required for the synthesis of the aspartate family of amino acids. The polypeptide is Peptidase E (Pasteurella multocida (strain Pm70)).